The primary structure comprises 138 residues: Ribosome-binding factor A (138 aa).

A compositionally biased stretch (low complexity) spans 1-20 (MSSRPPSSSGPAGIPKGAPS). The tract at residues 1–21 (MSSRPPSSSGPAGIPKGAPSQ) is disordered.

This sequence belongs to the RbfA family. In terms of assembly, monomer. Binds 30S ribosomal subunits, but not 50S ribosomal subunits or 70S ribosomes.

It is found in the cytoplasm. In terms of biological role, one of several proteins that assist in the late maturation steps of the functional core of the 30S ribosomal subunit. Associates with free 30S ribosomal subunits (but not with 30S subunits that are part of 70S ribosomes or polysomes). Required for efficient processing of 16S rRNA. May interact with the 5'-terminal helix region of 16S rRNA. The chain is Ribosome-binding factor A from Granulibacter bethesdensis (strain ATCC BAA-1260 / CGDNIH1).